We begin with the raw amino-acid sequence, 375 residues long: Queuine tRNA-ribosyltransferase (375 aa).

Catalysis depends on Asp-89, which acts as the Proton acceptor. Substrate contacts are provided by residues 89–93, Asp-143, Gln-187, and Gly-214; that span reads DSGGF. Residues 245–251 are RNA binding; it reads GVGKPED. Asp-264 acts as the Nucleophile in catalysis. The RNA binding; important for wobble base 34 recognition stretch occupies residues 269-273; it reads TRNAR. Residues Cys-302, Cys-304, Cys-307, and His-333 each coordinate Zn(2+).

This sequence belongs to the queuine tRNA-ribosyltransferase family. In terms of assembly, homodimer. Within each dimer, one monomer is responsible for RNA recognition and catalysis, while the other monomer binds to the replacement base PreQ1. Zn(2+) is required as a cofactor.

It carries out the reaction 7-aminomethyl-7-carbaguanine + guanosine(34) in tRNA = 7-aminomethyl-7-carbaguanosine(34) in tRNA + guanine. Its pathway is tRNA modification; tRNA-queuosine biosynthesis. Catalyzes the base-exchange of a guanine (G) residue with the queuine precursor 7-aminomethyl-7-deazaguanine (PreQ1) at position 34 (anticodon wobble position) in tRNAs with GU(N) anticodons (tRNA-Asp, -Asn, -His and -Tyr). Catalysis occurs through a double-displacement mechanism. The nucleophile active site attacks the C1' of nucleotide 34 to detach the guanine base from the RNA, forming a covalent enzyme-RNA intermediate. The proton acceptor active site deprotonates the incoming PreQ1, allowing a nucleophilic attack on the C1' of the ribose to form the product. After dissociation, two additional enzymatic reactions on the tRNA convert PreQ1 to queuine (Q), resulting in the hypermodified nucleoside queuosine (7-(((4,5-cis-dihydroxy-2-cyclopenten-1-yl)amino)methyl)-7-deazaguanosine). This is Queuine tRNA-ribosyltransferase from Salmonella enteritidis PT4 (strain P125109).